The following is a 165-amino-acid chain: MQQVKIYTASPSDLSPPVQSESFCVDLVLASDYRELEAKCAALVVENGALKKSEVEFNDYCRHECEDVGDTWVDDFTETPATDAFLAEMRAQAHKEGAYFVANRMLAAWDAGFIDDTAKNAADIARMILTSTEFMADAPEGDFDRSFADGVIEDIAAQLRKGVQS.

The polypeptide is Eae protein (eae) (Salmonella phage P22 (Bacteriophage P22)).